A 255-amino-acid polypeptide reads, in one-letter code: Small ribosomal subunit protein uS2 (255 aa).

The disordered stretch occupies residues 233 to 255; sequence DFVAEEAASEESLEELAEIVEGK.

It belongs to the universal ribosomal protein uS2 family.

The chain is Small ribosomal subunit protein uS2 (rpsB) from Lactococcus lactis subsp. lactis (strain IL1403) (Streptococcus lactis).